Here is a 154-residue protein sequence, read N- to C-terminus: Ascorbate-specific PTS system EIIA component (154 aa).

Positions 6 to 150 (SLAENKSIRL…QEVLDLIDRT (145 aa)) constitute a PTS EIIA type-2 domain. Residue His68 is the Tele-phosphohistidine intermediate of the active site. His68 bears the Phosphohistidine mark.

Its subcellular location is the cytoplasm. Its function is as follows. The phosphoenolpyruvate-dependent sugar phosphotransferase system (sugar PTS), a major carbohydrate active transport system, catalyzes the phosphorylation of incoming sugar substrates concomitantly with their translocation across the cell membrane. The enzyme II UlaABC PTS system is involved in ascorbate transport. This Shigella boydii serotype 4 (strain Sb227) protein is Ascorbate-specific PTS system EIIA component (ulaC).